The chain runs to 91 residues: Large ribosomal subunit protein uL23 (91 aa).

The protein belongs to the universal ribosomal protein uL23 family. Part of the 50S ribosomal subunit. Contacts protein L29, and trigger factor when it is bound to the ribosome.

In terms of biological role, one of the early assembly proteins it binds 23S rRNA. One of the proteins that surrounds the polypeptide exit tunnel on the outside of the ribosome. Forms the main docking site for trigger factor binding to the ribosome. The polypeptide is Large ribosomal subunit protein uL23 (Staphylococcus epidermidis (strain ATCC 35984 / DSM 28319 / BCRC 17069 / CCUG 31568 / BM 3577 / RP62A)).